Consider the following 339-residue polypeptide: Glycerol-3-phosphate dehydrogenase [NAD(P)+] (339 aa).

Residues S13, W14, and K108 each contribute to the NADPH site. Sn-glycerol 3-phosphate is bound by residues K108, G139, and S141. Residue A143 participates in NADPH binding. Residues K194, D247, S257, R258, and N259 each coordinate sn-glycerol 3-phosphate. The active-site Proton acceptor is K194. An NADPH-binding site is contributed by R258. NADPH-binding residues include V282 and E284.

This sequence belongs to the NAD-dependent glycerol-3-phosphate dehydrogenase family.

Its subcellular location is the cytoplasm. It carries out the reaction sn-glycerol 3-phosphate + NAD(+) = dihydroxyacetone phosphate + NADH + H(+). It catalyses the reaction sn-glycerol 3-phosphate + NADP(+) = dihydroxyacetone phosphate + NADPH + H(+). Its pathway is membrane lipid metabolism; glycerophospholipid metabolism. Functionally, catalyzes the reduction of the glycolytic intermediate dihydroxyacetone phosphate (DHAP) to sn-glycerol 3-phosphate (G3P), the key precursor for phospholipid synthesis. The sequence is that of Glycerol-3-phosphate dehydrogenase [NAD(P)+] from Streptococcus mutans serotype c (strain ATCC 700610 / UA159).